The chain runs to 526 residues: Exodeoxyribonuclease 7 large subunit (526 aa).

Residues 497-526 (AMTTEGGTPPAGAKKRSTKPAEPPKQGSLF) are disordered.

Belongs to the XseA family. In terms of assembly, heterooligomer composed of large and small subunits.

The protein resides in the cytoplasm. It catalyses the reaction Exonucleolytic cleavage in either 5'- to 3'- or 3'- to 5'-direction to yield nucleoside 5'-phosphates.. Its function is as follows. Bidirectionally degrades single-stranded DNA into large acid-insoluble oligonucleotides, which are then degraded further into small acid-soluble oligonucleotides. This chain is Exodeoxyribonuclease 7 large subunit, found in Rhizobium johnstonii (strain DSM 114642 / LMG 32736 / 3841) (Rhizobium leguminosarum bv. viciae).